The sequence spans 434 residues: Elongation factor 1-alpha (434 aa).

Residues 5-232 (KPHINLVVIG…DNVHPPKRPV (228 aa)) form the tr-type G domain. The G1 stretch occupies residues 14-21 (GHVVAGKS). 14–21 (GHVVAGKS) is a GTP binding site. The tract at residues 70 to 74 (GITID) is G2. The G3 stretch occupies residues 91-94 (DAPG). Residues 91–95 (DAPGH) and 153–156 (NKMD) each bind GTP. The interval 153–156 (NKMD) is G4. The G5 stretch occupies residues 196–198 (SGF).

Belongs to the TRAFAC class translation factor GTPase superfamily. Classic translation factor GTPase family. EF-Tu/EF-1A subfamily.

Its subcellular location is the cytoplasm. This protein promotes the GTP-dependent binding of aminoacyl-tRNA to the A-site of ribosomes during protein biosynthesis. The polypeptide is Elongation factor 1-alpha (Blastocystis hominis).